The primary structure comprises 1523 residues: Slit homolog 3 protein (1523 aa).

An N-terminal signal peptide occupies residues 1–33; the sequence is MAPGRTGAGAAVRARLALALALASILSGPPAAA. Residues 34 to 61 form the LRRNT domain; it reads CPTKCTCSAASVDCHGLGLRAVPRGIPR. LRR repeat units follow at residues 62-83, 86-107, 110-131, 134-155, 158-179, and 182-203; these read NAER…DFTG, NLRV…AFQD, QLER…LFQS, KLTR…AFRG, GVKN…AFRA, and DLEI…SFNH. N-linked (GlcNAc...) asparagine glycosylation occurs at N72. N-linked (GlcNAc...) asparagine glycosylation is present at N192. The LRRCT 1 domain maps to 215 to 265; that stretch reads NHLYCDCHLAWLSDWLRQRRTIGQFTLCMAPVHLRGFSVADVQKKEYVCPG. The region spanning 271–307 is the LRRNT 2 domain; the sequence is PACNANSLSCPSACSCSNNIVDCRGKGLTEIPANLPE. C284 and C293 form a disulfide bridge. LRR repeat units lie at residues 308–329, 332–353, 356–377, 380–401, and 404–425; these read GIVE…AFIQ, KLKR…AFQG, SLTS…LFDG, SLQL…TFQD, and NLNL…LFAP. The LRRCT 2 domain maps to 437–487; sequence NPFVCDCHLKWLADYLQDNPIETSGARCSSPRRLANKRISQIKSKKFRCSG. 4 disulfide bridges follow: C441/C464, C443/C485, C505/C511, and C509/C518. One can recognise an LRRNT 3 domain in the interval 496 to 532; the sequence is SSECFMDLVCPEKCRCEGTIVDCSNQKLSRIPSHLPE. LRR repeat units follow at residues 533–554, 558–579, 582–603, 606–627, and 630–651; these read YTTD…GIFK, NLRK…AFDG, GVQE…MFRG, GLKT…TFAG, and SVRL…AFTT. Residue N563 is glycosylated (N-linked (GlcNAc...) asparagine). N622 is a glycosylation site (N-linked (GlcNAc...) asparagine). The region spanning 663-713 is the LRRCT 3 domain; that stretch reads NPFNCNCHMAWLGRWLRKRRIVSGNPRCQKPFFLKEIPIQDVAIQDFTCEG. 2 cysteine pairs are disulfide-bonded: C667–C690 and C669–C711. The region spanning 716-752 is the LRRNT 4 domain; the sequence is ENSCQLSPRCPEQCTCVETVVRCSNRGLHTLPKGMPK. 4 LRR repeats span residues 753 to 774, 776 to 797, 800 to 821, and 824 to 845; these read DVTE…LSTF, QLTL…TFSN, HLST…AFNG, and SLRV…SFND. N784, N792, and N797 each carry an N-linked (GlcNAc...) asparagine glycan. The 51-residue stretch at 857 to 907 folds into the LRRCT 4 domain; that stretch reads NPLHCDCSLRWLSEWIKAGYKEPGIARCSSPESMADRLLLTTPTHRFQCKG. EGF-like domains are found at residues 918-953, 955-994, 996-1032, 1034-1072, 1074-1110, and 1119-1155; these read NACL…KDCT, PINT…QRCE, NPDD…ELCD, VIDY…KLCE, DNDD…LFCE, and QTSP…PRCE. Intrachain disulfides connect C920/C931, C925/C941, C943/C952, C959/C970, C964/C982, C984/C993, C1000/C1011, C1005/C1020, C1022/C1031, C1038/C1051, C1045/C1060, C1062/C1071, C1078/C1089, C1083/C1098, C1100/C1109, C1123/C1134, C1128/C1143, and C1145/C1154. N928 carries N-linked (GlcNAc...) asparagine glycosylation. The N-linked (GlcNAc...) asparagine glycan is linked to N1025. In terms of domain architecture, Laminin G-like spans 1158 to 1332; sequence ITVNFVGKDS…PQSLGVSPGC (175 aa). 2 N-linked (GlcNAc...) asparagine glycosylation sites follow: N1181 and N1247. Intrachain disulfides connect C1305–C1332, C1355–C1364, C1372–C1382, C1377–C1391, and C1393–C1402. EGF-like domains lie at 1340–1365 and 1368–1403; these read HGLC…PLCD and AQDP…PLCD. N1406 is a glycosylation site (N-linked (GlcNAc...) asparagine). The region spanning 1408 to 1444 is the EGF-like 9 domain; the sequence is SANACSAFKCHHGQCHISDRGEPYCLCQPGFSGNHCE. 7 disulfide bridges follow: C1412/C1422, C1417/C1432, C1434/C1443, C1449/C1487, C1467/C1501, C1478/C1517, and C1482/C1519. A CTCK domain is found at 1449–1523; it reads CLGEIVREAI…HLECGCRECS (75 aa).

The protein localises to the secreted. Its function is as follows. May act as molecular guidance cue in cellular migration, and function may be mediated by interaction with roundabout homolog receptors. The polypeptide is Slit homolog 3 protein (Slit3) (Rattus norvegicus (Rat)).